The following is a 1300-amino-acid chain: Zinc finger protein 536 (1300 aa).

2 disordered regions span residues 1–26 and 47–77; these read MEEA…GPVL and FPEL…GQPM. The span at 48–69 shows a compositional bias: basic and acidic residues; the sequence is PELHPRPNPEEKPPASLEEKAH. C2H2-type zinc fingers lie at residues 130 to 152, 158 to 180, 274 to 297, 300 to 323, 345 to 367, and 373 to 395; these read YPCP…MRTH, FKCP…LRTH, FRCT…RILH, YKCT…EKAH, FRCE…MRKH, and HCCQ…MKVH. Disordered regions lie at residues 584 to 604 and 650 to 739; these read HSTK…LESS and SRVH…QQPA. Positions 594–604 are enriched in basic and acidic residues; sequence LPSKLDPLESS. The C2H2-type 7 zinc-finger motif lies at 631 to 653; it reads TECPDCGRVFRTYHQVVVHSRVH. Residues 657-674 are compositionally biased toward basic and acidic residues; it reads RKGEEDGLHVGLDERRGS. Residues 675–696 show a composition bias toward polar residues; the sequence is GSDQESQSVSRSTTPGSSNVTE. 2 C2H2-type zinc fingers span residues 751–773 and 779–801; these read KDCP…LRIH and YKCP…LERH. Residues 802-826 are disordered; the sequence is HRERQNGAGPLSGQPPNQDHKDEMS. Phosphoserine occurs at positions 826 and 827. The span at 856 to 880 shows a compositional bias: polar residues; sequence SQQWTSGVLSSGDHSGQATGMSSEV. Disordered regions lie at residues 856–893, 937–985, and 1124–1260; these read SQQW…LPSK, KDKA…PDAA, and SGAS…SLDK. Basic and acidic residues-rich tracts occupy residues 950-972 and 1133-1143; these read HGVD…EKSQ and KEPDGKAHSEE. Composition is skewed to acidic residues over residues 1160–1170 and 1178–1187; these read DLSDIASSEDM and NDEEDVETEP. Residues 1194 to 1209 show a composition bias toward low complexity; that stretch reads LSALSKDSSSDGGDSL.

This sequence belongs to the krueppel C2H2-type zinc-finger protein family.

Its subcellular location is the nucleus. Functionally, transcriptional repressor that negatively regulates neuron differentiation by repressing retinoic acid-induced gene transcription. Binds and interrupts RARA from binding to retinoic acid response elements (RARE) composed of tandem 5'-AGGTCA-3' sites known as DR1-DR5. Recognizes and binds 2 copies of the core DNA sequence 5'-CCCCCA-3'. The sequence is that of Zinc finger protein 536 (ZNF536) from Homo sapiens (Human).